The chain runs to 264 residues: 3-methyl-2-oxobutanoate hydroxymethyltransferase (264 aa).

Residues aspartate 45 and aspartate 84 each contribute to the Mg(2+) site. Residues 45-46, aspartate 84, and lysine 112 contribute to the 3-methyl-2-oxobutanoate site; that span reads DS. Mg(2+) is bound at residue glutamate 114. Catalysis depends on glutamate 181, which acts as the Proton acceptor.

It belongs to the PanB family. Homodecamer; pentamer of dimers. The cofactor is Mg(2+).

The protein localises to the cytoplasm. The enzyme catalyses 3-methyl-2-oxobutanoate + (6R)-5,10-methylene-5,6,7,8-tetrahydrofolate + H2O = 2-dehydropantoate + (6S)-5,6,7,8-tetrahydrofolate. It participates in cofactor biosynthesis; (R)-pantothenate biosynthesis; (R)-pantoate from 3-methyl-2-oxobutanoate: step 1/2. Functionally, catalyzes the reversible reaction in which hydroxymethyl group from 5,10-methylenetetrahydrofolate is transferred onto alpha-ketoisovalerate to form ketopantoate. In Vibrio campbellii (strain ATCC BAA-1116), this protein is 3-methyl-2-oxobutanoate hydroxymethyltransferase.